The chain runs to 457 residues: Bifunctional protein GlmU (457 aa).

The pyrophosphorylase stretch occupies residues Met1 to Arg229. UDP-N-acetyl-alpha-D-glucosamine is bound by residues Leu8–Gly11, Lys22, Gln73, and Gly78–Thr79. Asp103 contributes to the Mg(2+) binding site. UDP-N-acetyl-alpha-D-glucosamine is bound by residues Gly140, Glu155, Asn170, and Asn227. Asn227 is a Mg(2+) binding site. Residues Val230–Asn250 are linker. Residues Gly251 to Lys457 are N-acetyltransferase. The UDP-N-acetyl-alpha-D-glucosamine site is built by Arg332 and Lys350. His362 functions as the Proton acceptor in the catalytic mechanism. The UDP-N-acetyl-alpha-D-glucosamine site is built by Tyr365 and Asn376. Residues Asn385–Tyr386, Ala422, and Arg439 each bind acetyl-CoA.

In the N-terminal section; belongs to the N-acetylglucosamine-1-phosphate uridyltransferase family. The protein in the C-terminal section; belongs to the transferase hexapeptide repeat family. As to quaternary structure, homotrimer. Mg(2+) is required as a cofactor.

It is found in the cytoplasm. It catalyses the reaction alpha-D-glucosamine 1-phosphate + acetyl-CoA = N-acetyl-alpha-D-glucosamine 1-phosphate + CoA + H(+). The enzyme catalyses N-acetyl-alpha-D-glucosamine 1-phosphate + UTP + H(+) = UDP-N-acetyl-alpha-D-glucosamine + diphosphate. It functions in the pathway nucleotide-sugar biosynthesis; UDP-N-acetyl-alpha-D-glucosamine biosynthesis; N-acetyl-alpha-D-glucosamine 1-phosphate from alpha-D-glucosamine 6-phosphate (route II): step 2/2. The protein operates within nucleotide-sugar biosynthesis; UDP-N-acetyl-alpha-D-glucosamine biosynthesis; UDP-N-acetyl-alpha-D-glucosamine from N-acetyl-alpha-D-glucosamine 1-phosphate: step 1/1. It participates in bacterial outer membrane biogenesis; LPS lipid A biosynthesis. Functionally, catalyzes the last two sequential reactions in the de novo biosynthetic pathway for UDP-N-acetylglucosamine (UDP-GlcNAc). The C-terminal domain catalyzes the transfer of acetyl group from acetyl coenzyme A to glucosamine-1-phosphate (GlcN-1-P) to produce N-acetylglucosamine-1-phosphate (GlcNAc-1-P), which is converted into UDP-GlcNAc by the transfer of uridine 5-monophosphate (from uridine 5-triphosphate), a reaction catalyzed by the N-terminal domain. This Clostridium botulinum (strain Langeland / NCTC 10281 / Type F) protein is Bifunctional protein GlmU.